Reading from the N-terminus, the 230-residue chain is Aminodeoxyfutalosine nucleosidase (230 aa).

The active-site Proton acceptor is the E13. Substrate is bound by residues G80, V154, and 174–175 (ME). Catalysis depends on D198, which acts as the Proton donor.

Belongs to the PNP/UDP phosphorylase family. MtnN subfamily. In terms of assembly, homodimer.

The enzyme catalyses 6-amino-6-deoxyfutalosine + H2O = dehypoxanthine futalosine + adenine. The catalysed reaction is S-adenosyl-L-homocysteine + H2O = S-(5-deoxy-D-ribos-5-yl)-L-homocysteine + adenine. It carries out the reaction S-methyl-5'-thioadenosine + H2O = 5-(methylsulfanyl)-D-ribose + adenine. It catalyses the reaction 5'-deoxyadenosine + H2O = 5-deoxy-D-ribose + adenine. It participates in quinol/quinone metabolism; menaquinone biosynthesis. The protein operates within amino-acid biosynthesis; L-methionine biosynthesis via salvage pathway; S-methyl-5-thio-alpha-D-ribose 1-phosphate from S-methyl-5'-thioadenosine (hydrolase route): step 1/2. Is inhibited by the transition state analog BuT-DADMe-ImmA. This compound is also able to inhibit H.pylori growth and is more efficient than antibiotics commonly used in ulcer therapy. In terms of biological role, catalyzes the direct conversion of aminodeoxyfutalosine (AFL) into dehypoxanthine futalosine (DHFL) and adenine via the hydrolysis of the N-glycosidic bond; this reaction seems to represent an essential step in the menaquinone biosynthesis pathway in Helicobacter species. Also catalyzes the hydrolysis of 5'-methylthioadenosine (MTA) to adenine and 5'-methylthioribose. Can also probably use S-adenosylhomocysteine (SAH) as substrate, leading to adenine and S-ribosylhomocysteine. These other activities highlight the tremendous versatility of the enzyme, which also plays key roles in S-adenosylmethionine recycling and in the biosynthesis of the quorum-sensing molecule autoinducer-2. This Helicobacter pylori (strain J99 / ATCC 700824) (Campylobacter pylori J99) protein is Aminodeoxyfutalosine nucleosidase (mtnN).